The chain runs to 160 residues: Leptin (160 aa).

The N-terminal stretch at Met1 to Cys17 is a signal peptide. An intrachain disulfide couples Cys109 to Cys160.

It belongs to the leptin family.

The protein resides in the secreted. Its function is as follows. May function as part of a signaling pathway that acts to regulate the size of the body fat depot. In Tetraodon nigroviridis (Spotted green pufferfish), this protein is Leptin (lep).